The primary structure comprises 295 residues: Acetyl-coenzyme A carboxylase carboxyl transferase subunit beta (295 aa).

The disordered stretch occupies residues 1-20 (MSWLSKLMPSGIRTENTPAK). A CoA carboxyltransferase N-terminal domain is found at 28–295 (LWEKCSNCGS…QPHPQDADAA (268 aa)). Residues Cys-32, Cys-35, Cys-51, and Cys-54 each contribute to the Zn(2+) site. The C4-type zinc-finger motif lies at 32 to 54 (CSNCGSALYGPELEENLEVCPKC).

This sequence belongs to the AccD/PCCB family. Acetyl-CoA carboxylase is a heterohexamer composed of biotin carboxyl carrier protein (AccB), biotin carboxylase (AccC) and two subunits each of ACCase subunit alpha (AccA) and ACCase subunit beta (AccD). Zn(2+) serves as cofactor.

Its subcellular location is the cytoplasm. The catalysed reaction is N(6)-carboxybiotinyl-L-lysyl-[protein] + acetyl-CoA = N(6)-biotinyl-L-lysyl-[protein] + malonyl-CoA. The protein operates within lipid metabolism; malonyl-CoA biosynthesis; malonyl-CoA from acetyl-CoA: step 1/1. Its function is as follows. Component of the acetyl coenzyme A carboxylase (ACC) complex. Biotin carboxylase (BC) catalyzes the carboxylation of biotin on its carrier protein (BCCP) and then the CO(2) group is transferred by the transcarboxylase to acetyl-CoA to form malonyl-CoA. In Xanthomonas oryzae pv. oryzae (strain MAFF 311018), this protein is Acetyl-coenzyme A carboxylase carboxyl transferase subunit beta.